The following is a 102-amino-acid chain: Large ribosomal subunit protein bL21 (102 aa).

This sequence belongs to the bacterial ribosomal protein bL21 family. In terms of assembly, part of the 50S ribosomal subunit. Contacts protein L20.

This protein binds to 23S rRNA in the presence of protein L20. This chain is Large ribosomal subunit protein bL21, found in Azorhizobium caulinodans (strain ATCC 43989 / DSM 5975 / JCM 20966 / LMG 6465 / NBRC 14845 / NCIMB 13405 / ORS 571).